Reading from the N-terminus, the 322-residue chain is D-alanine--D-alanine ligase (322 aa).

The ATP-grasp domain occupies K108–E311. I136–T192 contacts ATP. D265, E278, and N280 together coordinate Mg(2+).

It belongs to the D-alanine--D-alanine ligase family. Mg(2+) serves as cofactor. Requires Mn(2+) as cofactor.

The protein resides in the cytoplasm. It carries out the reaction 2 D-alanine + ATP = D-alanyl-D-alanine + ADP + phosphate + H(+). The protein operates within cell wall biogenesis; peptidoglycan biosynthesis. Functionally, cell wall formation. In Desulfotalea psychrophila (strain LSv54 / DSM 12343), this protein is D-alanine--D-alanine ligase.